The sequence spans 332 residues: Abscisic acid-inducible protein kinase (332 aa).

ATP is bound by residues 1–8 and Lys-23; that span reads GSGNFGVA. A Protein kinase domain is found at 1–250; it reads GSGNFGVAKL…IPEIKNHPWF (250 aa). Residue Asp-113 is the Proton acceptor of the active site.

This sequence belongs to the protein kinase superfamily. Ser/Thr protein kinase family. Post-translationally, autophosphorylated.

It catalyses the reaction L-seryl-[protein] + ATP = O-phospho-L-seryl-[protein] + ADP + H(+). The enzyme catalyses L-threonyl-[protein] + ATP = O-phospho-L-threonyl-[protein] + ADP + H(+). Involved in water-stress responses. In Triticum aestivum (Wheat), this protein is Abscisic acid-inducible protein kinase.